A 555-amino-acid chain; its full sequence is Steroid-22-oyl-CoA synthetase (555 aa).

This sequence belongs to the ATP-dependent AMP-binding enzyme family.

It catalyses the reaction 3-oxochol-4-en-22-oate + ATP + CoA = 3-oxochol-4-en-22-oyl-CoA + AMP + diphosphate. The enzyme catalyses 3-hydroxy-9-oxo-9,10-seco-chola-1,3,5-trien-22-oate + ATP + CoA = 3-hydroxy-9-oxo-9,10-seco-chola-1,3,5-trien-22-oyl-CoA + AMP + diphosphate. The protein operates within steroid metabolism. Its function is as follows. Involved in cholate catabolism. Catalyzes the ATP-dependent formation of CoA thioesters of steroids with isopropanoyl side chains, likely occurring as degradation intermediates. Can use 4-BNC, HSBNC and HIDP as substrate. The polypeptide is Steroid-22-oyl-CoA synthetase (Rhodococcus jostii (strain RHA1)).